Consider the following 932-residue polypeptide: Valine--tRNA ligase (932 aa).

A 'HIGH' region motif is present at residues 75-85 (PNVTGQLHMGH). The 'KMSKS' region motif lies at 568–572 (KMSKS). Lys571 contacts ATP. Residues 863–929 (TVDVAAERKR…ERITARLEGL (67 aa)) adopt a coiled-coil conformation.

This sequence belongs to the class-I aminoacyl-tRNA synthetase family. ValS type 1 subfamily. In terms of assembly, monomer.

It localises to the cytoplasm. The enzyme catalyses tRNA(Val) + L-valine + ATP = L-valyl-tRNA(Val) + AMP + diphosphate. Catalyzes the attachment of valine to tRNA(Val). As ValRS can inadvertently accommodate and process structurally similar amino acids such as threonine, to avoid such errors, it has a 'posttransfer' editing activity that hydrolyzes mischarged Thr-tRNA(Val) in a tRNA-dependent manner. In Corynebacterium jeikeium (strain K411), this protein is Valine--tRNA ligase.